Here is a 404-residue protein sequence, read N- to C-terminus: Serine/threonine transporter SstT (404 aa).

8 helical membrane passes run 10 to 30 (ILGGNLVLRIAVGLVLGICLA), 53 to 73 (AIAPILVFVLVMASIANKEVG), 81 to 101 (ILVMYVLGTFVAAVTAVILSY), 140 to 160 (AITNGNFIGILAWSIGLGIAL), 177 to 197 (AVSFVVKVVIAFAPIGVFGLV), 215 to 235 (LLAVLLGAMAIVAFILNPLLV), 287 to 307 (IAIPLGANINMAGAAITITVL), and 329 to 349 (IVASICACGASGVAGGSLLLI).

Belongs to the dicarboxylate/amino acid:cation symporter (DAACS) (TC 2.A.23) family.

It localises to the cell inner membrane. It catalyses the reaction L-serine(in) + Na(+)(in) = L-serine(out) + Na(+)(out). It carries out the reaction L-threonine(in) + Na(+)(in) = L-threonine(out) + Na(+)(out). Its function is as follows. Involved in the import of serine and threonine into the cell, with the concomitant import of sodium (symport system). The polypeptide is Serine/threonine transporter SstT (Glaesserella parasuis serovar 5 (strain SH0165) (Haemophilus parasuis)).